We begin with the raw amino-acid sequence, 203 residues long: Urease accessory protein UreG (203 aa).

GTP is bound at residue 14–21 (GPVGSGKT).

The protein belongs to the SIMIBI class G3E GTPase family. UreG subfamily. In terms of assembly, homodimer. UreD, UreF and UreG form a complex that acts as a GTP-hydrolysis-dependent molecular chaperone, activating the urease apoprotein by helping to assemble the nickel containing metallocenter of UreC. The UreE protein probably delivers the nickel.

It localises to the cytoplasm. Functionally, facilitates the functional incorporation of the urease nickel metallocenter. This process requires GTP hydrolysis, probably effectuated by UreG. This chain is Urease accessory protein UreG, found in Rhizobium leguminosarum bv. viciae.